We begin with the raw amino-acid sequence, 234 residues long: Elongation factor Tu (234 aa).

In terms of domain architecture, tr-type G spans 1-125; sequence KNMITGAAQM…EVDAFIPTPE (125 aa). Position 47–50 (47–50) interacts with GTP; it reads NKQD.

The protein belongs to the TRAFAC class translation factor GTPase superfamily. Classic translation factor GTPase family. EF-Tu/EF-1A subfamily. As to quaternary structure, monomer.

Its subcellular location is the cytoplasm. The enzyme catalyses GTP + H2O = GDP + phosphate + H(+). Its function is as follows. GTP hydrolase that promotes the GTP-dependent binding of aminoacyl-tRNA to the A-site of ribosomes during protein biosynthesis. The protein is Elongation factor Tu (tufA) of Prochlorothrix hollandica.